We begin with the raw amino-acid sequence, 193 residues long: Homeobox protein HD-12 (193 aa).

A DNA-binding region (homeobox; TALE-type) is located at residues Ser123–Met185.

The protein belongs to the TALE/KNOX homeobox family.

The protein localises to the nucleus. The protein is Homeobox protein HD-12 (HD-12) of Encephalitozoon cuniculi (strain GB-M1) (Microsporidian parasite).